Here is a 431-residue protein sequence, read N- to C-terminus: Glucose-1-phosphate adenylyltransferase (431 aa).

Beta-D-fructose 1,6-bisphosphate is bound at residue K39. Residues R40, H46, and R52 each contribute to the AMP site. Alpha-D-glucose 1-phosphate-binding positions include Y114, G179, 194–195, and S212; that span reads EK. Positions 370 and 386 each coordinate AMP. Residues 419 to 423 and 429 to 431 each bind beta-D-fructose 1,6-bisphosphate; these read REMLR and QER.

It belongs to the bacterial/plant glucose-1-phosphate adenylyltransferase family. As to quaternary structure, homotetramer.

The enzyme catalyses alpha-D-glucose 1-phosphate + ATP + H(+) = ADP-alpha-D-glucose + diphosphate. It participates in glycan biosynthesis; glycogen biosynthesis. Allosterically activated by fructose-1,6-bisphosphate (F16BP) and inhibited by AMP. In terms of biological role, involved in the biosynthesis of ADP-glucose, a building block required for the elongation reactions to produce glycogen. Catalyzes the reaction between ATP and alpha-D-glucose 1-phosphate (G1P) to produce pyrophosphate and ADP-Glc. The protein is Glucose-1-phosphate adenylyltransferase of Salmonella typhi.